The chain runs to 771 residues: Probable aconitate hydratase, mitochondrial (771 aa).

Residues glutamine 86 and 179-181 each bind substrate; that span reads DSH. Cysteine 372, cysteine 435, and cysteine 438 together coordinate [4Fe-4S] cluster. Substrate is bound by residues arginine 461, arginine 466, arginine 594, and 657–658; that span reads SR.

It belongs to the aconitase/IPM isomerase family. In terms of assembly, monomer. [4Fe-4S] cluster is required as a cofactor.

It localises to the mitochondrion. The enzyme catalyses citrate = D-threo-isocitrate. Its pathway is carbohydrate metabolism; tricarboxylic acid cycle; isocitrate from oxaloacetate: step 2/2. Functionally, catalyzes the isomerization of citrate to isocitrate via cis-aconitate. This is Probable aconitate hydratase, mitochondrial (aco2) from Dictyostelium discoideum (Social amoeba).